Here is a 957-residue protein sequence, read N- to C-terminus: Glycine dehydrogenase (decarboxylating) (957 aa).

N6-(pyridoxal phosphate)lysine is present on Lys-708.

Belongs to the GcvP family. The glycine cleavage system is composed of four proteins: P, T, L and H. The cofactor is pyridoxal 5'-phosphate.

The enzyme catalyses N(6)-[(R)-lipoyl]-L-lysyl-[glycine-cleavage complex H protein] + glycine + H(+) = N(6)-[(R)-S(8)-aminomethyldihydrolipoyl]-L-lysyl-[glycine-cleavage complex H protein] + CO2. Its function is as follows. The glycine cleavage system catalyzes the degradation of glycine. The P protein binds the alpha-amino group of glycine through its pyridoxal phosphate cofactor; CO(2) is released and the remaining methylamine moiety is then transferred to the lipoamide cofactor of the H protein. In Klebsiella pneumoniae (strain 342), this protein is Glycine dehydrogenase (decarboxylating).